Reading from the N-terminus, the 24-residue chain is Ascaphin-2 (24 aa).

Expressed by the skin glands.

It localises to the secreted. Functionally, antimicrobial peptide that shows higher potency against Gram-negative bacteria than against Gram-positive bacteria. Has a very week hemolytic activity. This Ascaphus truei (Coastal tailed frog) protein is Ascaphin-2.